The primary structure comprises 280 residues: uncharacterized protein (280 aa).

Transmembrane regions (helical) follow at residues 15–35 (IVDI…INRL), 68–88 (IGFI…ILAG), and 94–114 (IVIG…VFLI).

This sequence belongs to the MscS (TC 1.A.23) family.

The protein resides in the cell membrane. In terms of biological role, may play a role in resistance to osmotic downshock. This is an uncharacterized protein from Bacillus subtilis (strain 168).